A 101-amino-acid polypeptide reads, in one-letter code: NAD(P)H-quinone oxidoreductase subunit 4L (101 aa).

3 helical membrane passes run 3 to 23, 30 to 50, and 64 to 84; these read LQYFLLIAAALFCIGVYGLVT, VLMSIELMLNAVNLNLMAFSN, and IFVITIAAAEAAVGLAIVLAI.

The protein belongs to the complex I subunit 4L family. In terms of assembly, NDH-1 can be composed of about 15 different subunits; different subcomplexes with different compositions have been identified which probably have different functions.

The protein resides in the cellular thylakoid membrane. It catalyses the reaction a plastoquinone + NADH + (n+1) H(+)(in) = a plastoquinol + NAD(+) + n H(+)(out). It carries out the reaction a plastoquinone + NADPH + (n+1) H(+)(in) = a plastoquinol + NADP(+) + n H(+)(out). In terms of biological role, NDH-1 shuttles electrons from an unknown electron donor, via FMN and iron-sulfur (Fe-S) centers, to quinones in the respiratory and/or the photosynthetic chain. The immediate electron acceptor for the enzyme in this species is believed to be plastoquinone. Couples the redox reaction to proton translocation, and thus conserves the redox energy in a proton gradient. Cyanobacterial NDH-1 also plays a role in inorganic carbon-concentration. In Leptolyngbya boryana (Plectonema boryanum), this protein is NAD(P)H-quinone oxidoreductase subunit 4L.